The sequence spans 258 residues: MTRYKAQISYDGSAFSGFQRQPNCRTVQEEIERTLKRLNSGNDVIIHGAGRTDAGVHAYGQVIHFDLPQARDVEKLRFGLDTQCPDDIDIVKVEQVSDDFHCRYDKHIKTYEFLVDIGRPKNPMMRNYATHYPYPVIIELMKEAIKDLVGTHDFTGFTASGTSVENKVRTIFDAKIQFEASKNLLIFTFTGNGFLYKQVRNMVGTLLKIGNGRMPISQIKTILQAKNRDLAGPTAAGNGLYLKEIIYEDEECFSNFRK.

Residue Asp-53 is the Nucleophile of the active site. Residue Tyr-111 coordinates substrate.

It belongs to the tRNA pseudouridine synthase TruA family. Homodimer.

It catalyses the reaction uridine(38/39/40) in tRNA = pseudouridine(38/39/40) in tRNA. Formation of pseudouridine at positions 38, 39 and 40 in the anticodon stem and loop of transfer RNAs. The polypeptide is tRNA pseudouridine synthase A (Streptococcus agalactiae serotype Ia (strain ATCC 27591 / A909 / CDC SS700)).